The following is a 99-amino-acid chain: Large ribosomal subunit protein uL23 (99 aa).

Belongs to the universal ribosomal protein uL23 family. As to quaternary structure, part of the 50S ribosomal subunit. Contacts protein L29, and trigger factor when it is bound to the ribosome.

One of the early assembly proteins it binds 23S rRNA. One of the proteins that surrounds the polypeptide exit tunnel on the outside of the ribosome. Forms the main docking site for trigger factor binding to the ribosome. This Lachnospira eligens (strain ATCC 27750 / DSM 3376 / VPI C15-48 / C15-B4) (Eubacterium eligens) protein is Large ribosomal subunit protein uL23.